Reading from the N-terminus, the 184-residue chain is Large ribosomal subunit protein uL5 (184 aa).

Belongs to the universal ribosomal protein uL5 family. As to quaternary structure, component of the large ribosomal subunit. Interacts with Fmr1 to form the RNA-induced silencing complex (RISC), a ribonucleoprotein (RNP) complex involved in translation regulation, other components of the complex are RpL5, Rm62, AGO2 and Dcr-1.

Its subcellular location is the nucleus. The protein localises to the cytoplasm. Component of the ribosome, a large ribonucleoprotein complex responsible for the synthesis of proteins in the cell. The small ribosomal subunit (SSU) binds messenger RNAs (mRNAs) and translates the encoded message by selecting cognate aminoacyl-transfer RNA (tRNA) molecules. The large subunit (LSU) contains the ribosomal catalytic site termed the peptidyl transferase center (PTC), which catalyzes the formation of peptide bonds, thereby polymerizing the amino acids delivered by tRNAs into a polypeptide chain. The nascent polypeptides leave the ribosome through a tunnel in the LSU and interact with protein factors that function in enzymatic processing, targeting, and the membrane insertion of nascent chains at the exit of the ribosomal tunnel. This chain is Large ribosomal subunit protein uL5 (RpL11), found in Drosophila melanogaster (Fruit fly).